The chain runs to 350 residues: Flap endonuclease 1 (350 aa).

The interval 1 to 102 is N-domain; it reads MGVNLKDLIP…KEIEKRRKIR (102 aa). The Mg(2+) site is built by Asp-31, Asp-84, Glu-156, Glu-158, Asp-177, Asp-179, and Asp-240. Residues 120 to 262 are I-domain; that stretch reads AARRYAMMSA…KALQLVKAYK (143 aa). The segment at 341-349 is interaction with PCNA; that stretch reads KQLGLEAWF.

It belongs to the XPG/RAD2 endonuclease family. FEN1 subfamily. As to quaternary structure, interacts with PCNA. PCNA stimulates the nuclease activity without altering cleavage specificity. It depends on Mg(2+) as a cofactor.

Functionally, structure-specific nuclease with 5'-flap endonuclease and 5'-3' exonuclease activities involved in DNA replication and repair. During DNA replication, cleaves the 5'-overhanging flap structure that is generated by displacement synthesis when DNA polymerase encounters the 5'-end of a downstream Okazaki fragment. Binds the unpaired 3'-DNA end and kinks the DNA to facilitate 5' cleavage specificity. Cleaves one nucleotide into the double-stranded DNA from the junction in flap DNA, leaving a nick for ligation. Also involved in the base excision repair (BER) pathway. Acts as a genome stabilization factor that prevents flaps from equilibrating into structures that lead to duplications and deletions. Also possesses 5'-3' exonuclease activity on nicked or gapped double-stranded DNA. The protein is Flap endonuclease 1 of Staphylothermus marinus (strain ATCC 43588 / DSM 3639 / JCM 9404 / F1).